The chain runs to 169 residues: Chorismate pyruvate-lyase (169 aa).

Positions 35, 77, 115, and 156 each coordinate substrate.

This sequence belongs to the UbiC family. As to quaternary structure, monomer.

It is found in the cytoplasm. The catalysed reaction is chorismate = 4-hydroxybenzoate + pyruvate. Its pathway is cofactor biosynthesis; ubiquinone biosynthesis. Functionally, removes the pyruvyl group from chorismate, with concomitant aromatization of the ring, to provide 4-hydroxybenzoate (4HB) for the ubiquinone pathway. In Cronobacter sakazakii (strain ATCC BAA-894) (Enterobacter sakazakii), this protein is Chorismate pyruvate-lyase.